The following is a 659-amino-acid chain: Pseudouridylate synthase 7 homolog (659 aa).

The residue at position 1 (Met1) is an N-acetylmethionine. 2 stretches are compositionally biased toward polar residues: residues 1–10 and 39–54; these read MEMTEMTSVS and CPTT…SLPS. Residues 1 to 99 form a disordered region; the sequence is MEMTEMTSVS…EEEEEEAESF (99 aa). Residue Ser10 is modified to Phosphoserine. Residues 75–98 are compositionally biased toward acidic residues; that stretch reads PSEEEEEEDGLSEEEEEEEEEAES. A Phosphoserine modification is found at Ser125. The active-site Nucleophile is the Asp292. The region spanning 368–578 is the TRUD domain; sequence GFINYYGMQR…SGAYRKIIIR (211 aa).

Belongs to the pseudouridine synthase TruD family. In terms of assembly, interacts with SIRT1.

It is found in the nucleus. The catalysed reaction is a uridine in tRNA = a pseudouridine in tRNA. It carries out the reaction uridine(13) in tRNA = pseudouridine(13) in tRNA. The enzyme catalyses a uridine in mRNA = a pseudouridine in mRNA. Its function is as follows. Pseudouridylate synthase that catalyzes pseudouridylation of RNAs. Acts as a regulator of protein synthesis in embryonic stem cells by mediating pseudouridylation of RNA fragments derived from tRNAs (tRFs): pseudouridylated tRFs inhibit translation by targeting the translation initiation complex. Also catalyzes pseudouridylation of mRNAs: mediates pseudouridylation of mRNAs with the consensus sequence 5'-UGUAG-3'. Acts as a regulator of pre-mRNA splicing by mediating pseudouridylation of pre-mRNAs at locations associated with alternatively spliced regions. Pseudouridylation of pre-mRNAs near splice sites directly regulates mRNA splicing and mRNA 3'-end processing. In addition to mRNAs and tRNAs, binds other types of RNAs, such as snRNAs, Y RNAs and vault RNAs, suggesting that it can catalyze pseudouridylation of many RNA types. The polypeptide is Pseudouridylate synthase 7 homolog (Bos taurus (Bovine)).